Reading from the N-terminus, the 191-residue chain is Outer membrane lipoprotein DolP (191 aa).

A signal peptide spans 1–18; it reads MKAFSPLAVLISALLLQG. Cysteine 19 carries N-palmitoyl cysteine lipidation. Cysteine 19 carries S-diacylglycerol cysteine lipidation. 2 consecutive BON domains span residues 46 to 115 and 124 to 191; these read DDGT…RQGQ and NDTW…TYIK.

It belongs to the lipoprotein DolP family.

The protein resides in the cell outer membrane. Plays an important role in maintaining outer membrane integrity. Contributes to virulence. This chain is Outer membrane lipoprotein DolP, found in Salmonella typhimurium (strain LT2 / SGSC1412 / ATCC 700720).